The sequence spans 217 residues: Ribosomal large subunit pseudouridine synthase E (217 aa).

Catalysis depends on Asp79, which acts as the Nucleophile.

It belongs to the pseudouridine synthase RsuA family.

It carries out the reaction uridine(2457) in 23S rRNA = pseudouridine(2457) in 23S rRNA. Functionally, responsible for synthesis of pseudouridine from uracil-2457 in 23S ribosomal RNA. The chain is Ribosomal large subunit pseudouridine synthase E (rluE) from Escherichia coli O6:H1 (strain CFT073 / ATCC 700928 / UPEC).